The sequence spans 313 residues: L-lactate dehydrogenase 1 (313 aa).

Residues valine 15, aspartate 36, lysine 41, tyrosine 66, and 80 to 81 (GA) contribute to the NAD(+) site. Substrate-binding residues include glutamine 83 and arginine 89. Residues serine 102, 119–121 (VSN), and serine 144 each bind NAD(+). Substrate is bound at residue 121–124 (NPVD). 149–152 (DTSR) provides a ligand contact to substrate. Beta-D-fructose 1,6-bisphosphate is bound by residues arginine 154 and histidine 169. The active-site Proton acceptor is histidine 176. Tyrosine 222 carries the phosphotyrosine modification. Position 231 (threonine 231) interacts with substrate.

This sequence belongs to the LDH/MDH superfamily. LDH family. As to quaternary structure, homotetramer.

Its subcellular location is the cytoplasm. It carries out the reaction (S)-lactate + NAD(+) = pyruvate + NADH + H(+). It participates in fermentation; pyruvate fermentation to lactate; (S)-lactate from pyruvate: step 1/1. Its activity is regulated as follows. Allosterically activated by fructose 1,6-bisphosphate (FBP). In terms of biological role, catalyzes the conversion of lactate to pyruvate. The protein is L-lactate dehydrogenase 1 of Clostridium acetobutylicum (strain ATCC 824 / DSM 792 / JCM 1419 / IAM 19013 / LMG 5710 / NBRC 13948 / NRRL B-527 / VKM B-1787 / 2291 / W).